Here is a 918-residue protein sequence, read N- to C-terminus: MISPQGVAVATLLILGVVHGSLIDDLKAKFSSSSSGFGASMFSNSGAKSSFGGGFAMPKLDASKAAMVHSSSSHKGHHQSSGSSSNTHSLTVVGADGKNITENSEKKDGYNKESKVDEANENTKIKSADGSVIETGKSHNKSSDDASSYGLEKSSKTYADKNGTMLSSNTNKINNQSRSAALDEGNEFVNQQNADGTFLRNNTGHKNTDEHLSHNVLDENAQMSIGADGTSHNITNRKGSVGDSHNAASDAHSNFESLDAQGNKKSQNYSKKAASASGSNADFESNLESLKNADGTSMSNSTGNFNNTSYDKATAEEVMSKKNVNADGTSSMEASHAGSNSSKINSASGQSSDLSMVGPNGIKSHSTSNKTDNYALDEANQSAGSISEQIGKNGQRSLNESSIESGRKAESRNNTAADTLDSVDANGTVSSSHSKSASGTSLDENHNKTHALQASVDEHGNMKNHSIDGSYRNKKTGEFGNSEMSASIKNADGTMSQVNVKNDTNRNTYEAEKSALEKNHEKNSDGTFKDESKGSNSRVNRTDGGSNLAVGSYSVGKGGVSSNETIASSNAFNTSDAESNQFDHLHQKTANGTEITHAKDSKQVAASANAKSSLDTSMSAVDAKGNKVDKTSSQAADSHDAISASSDVDAKIVKHADRSESISNDSSNQTASEHNDSSKQSEHEKRQNADGSFSDVSSNSAKKNAVKDATDVRQNAFANVDAAGNSVSEVKNSLVENHSNDSDASSDSKIHSKSVDGTELTDAKHSNVSTSHLTEGQLAQIQKKLAMADGSVVMSNDNSHITHEKSRADVDAGHKAHLSKADGSSTDIDEGFKHHSDLESRGEGAQKQRYQKLGNGTESSMDVGYEKSMAKGGDQTSSHKKTLAKDGKGHFTETKDGSESHHKIDDKDVKQHKDIIQM.

7 disordered regions span residues Ala-66–Gly-150, Gly-226–Phe-283, Ala-326–Asn-481, Ala-515–Leu-548, Glu-594–Lys-707, Asn-737–Thr-774, and His-800–Met-918. The span at Gln-79–Ser-89 shows a compositional bias: low complexity. Basic and acidic residues predominate over residues Asn-103–Ser-127. Residues Ser-270–Ala-281 are compositionally biased toward low complexity. 3 stretches are compositionally biased toward polar residues: residues Ala-326–Leu-354, Lys-363–Asp-372, and Ala-379–Glu-404. Low complexity predominate over residues Ser-430–Ser-441. Over residues Ala-515–Lys-533 the composition is skewed to basic and acidic residues. Polar residues-rich tracts occupy residues Gly-534 to Gly-545 and Val-604 to Ser-619. Low complexity predominate over residues Ser-632–Asp-647. A compositionally biased stretch (basic and acidic residues) spans Val-648 to Glu-660. Residues Ser-661–Ser-672 are compositionally biased toward polar residues. Basic and acidic residues predominate over residues Glu-673–Asn-688. The span at Ala-689–Lys-702 shows a compositional bias: polar residues. 4 stretches are compositionally biased toward basic and acidic residues: residues His-738–His-765, His-800–His-814, Glu-830–Gln-846, and Leu-883–Met-918.

This is an uncharacterized protein from Caenorhabditis elegans.